The sequence spans 33 residues: NAD-reducing hydrogenase HoxS subunit gamma (33 aa).

Residues 1–33 enclose the 2Fe-2S ferredoxin-type domain; the sequence is SIEIEIDGVTVTTEESRTLVDVAAEAGVYIPTL.

Belongs to the complex I 75 kDa subunit family. Tetramer of an alpha and a gamma subunits (flavin-containing dimer), and a delta and a nickel-containing beta subunits (hydrogenase dimer). The cofactor is [4Fe-4S] cluster.

It localises to the cytoplasm. It carries out the reaction H2 + NAD(+) = NADH + H(+). Functionally, subunits alpha and gamma of HoxS constitute an NADH--oxidoreductase. The sequence is that of NAD-reducing hydrogenase HoxS subunit gamma (hoxU) from Rhodococcus opacus (Nocardia opaca).